A 2168-amino-acid chain; its full sequence is Genome polyprotein (2168 aa).

Positions 1–20 (MGMQMSKNTAGSHTTVTQAS) are disordered. Residue G2 is the site of N-myristoyl glycine; by host attachment. Residues 2-1479 (GMQMSKNTAG…NVSIATTILS (1478 aa)) are Cytoplasmic-facing. Amphipathic alpha-helix stretches follow at residues 551–567 (ALQA…ISSV) and 554–575 (APVE…TAQD). Polar residues predominate over residues 576–589 (TQPSSHNISTSETP). Residues 576–607 (TQPSSHNISTSETPALQAAETGASSNASDEGM) are disordered. Catalysis depends on for protease 2A activity residues H856 and D874. Zn(2+)-binding residues include C891 and C893. C945 serves as the catalytic For protease 2A activity. Zn(2+) contacts are provided by C951 and H953. The interval 1085 to 1157 (GDDWLKKFTS…EHSCPTTEQQ (73 aa)) is membrane-binding. Residues 1085-1223 (GDDWLKKFTS…TAGTGKSLAT (139 aa)) are oligomerization. An RNA-binding region spans residues 1106 to 1110 (AEKIM). Residues 1189-1347 (EKRILGYIQF…YKTHNGTLDV (159 aa)) enclose the SF3 helicase domain. Residues C1354, C1365, and C1370 each contribute to the Zn(2+) site. A C4-type; degenerate zinc finger spans residues 1354-1370 (CEDCCPANFKTCMPLIC). An RNA-binding region spans residues 1397-1404 (EWKRRNQV). An oligomerization region spans residues 1408-1413 (YVRLFQ). The stretch at 1480–1495 (SLVLLTSVITLVYLVY) is an intramembrane region. The Cytoplasmic segment spans residues 1496–2168 (RLFAGYQGPY…SLLREWYEKF (673 aa)). Residue Y1505 is modified to O-(5'-phospho-RNA)-tyrosine. Positions 1525–1703 (GPLMDFGVGM…FCAALKRSYF (179 aa)) constitute a Peptidase C3 domain. Catalysis depends on for protease 3C activity residues H1564, E1595, and C1671. The region spanning 1934 to 2048 (GELFGFDYTA…ASYPYRIDPA (115 aa)) is the RdRp catalytic domain. D1940 and D2035 together coordinate Mg(2+).

This sequence belongs to the picornaviruses polyprotein family. Interacts with capsid protein VP1 and capsid protein VP3 to form heterotrimeric protomers. In terms of assembly, interacts with capsid protein VP0, and capsid protein VP3 to form heterotrimeric protomers. Five protomers subsequently associate to form pentamers which serve as building blocks for the capsid. Interacts with capsid protein VP2, capsid protein VP3 and capsid protein VP4 following cleavage of capsid protein VP0. As to quaternary structure, interacts with capsid protein VP1 and capsid protein VP3 in the mature capsid. Interacts with capsid protein VP0 and capsid protein VP1 to form heterotrimeric protomers. Five protomers subsequently associate to form pentamers which serve as building blocks for the capsid. Interacts with capsid protein VP4 in the mature capsid. Interacts with protein 2C; this interaction may be important for virion morphogenesis. In terms of assembly, interacts with capsid protein VP1 and capsid protein VP3. As to quaternary structure, homodimer. Homohexamer; forms a hexameric ring structure with 6-fold symmetry characteristic of AAA+ ATPases. Interacts (via N-terminus) with host RTN3 (via reticulon domain); this interaction is important for viral replication. Interacts with capsid protein VP3; this interaction may be important for virion morphogenesis. In terms of assembly, interacts with protein 3CD. As to quaternary structure, homodimer. Interacts with host GBF1. Interacts (via GOLD domain) with host ACBD3 (via GOLD domain); this interaction allows the formation of a viral protein 3A/ACBD3 heterotetramer with a 2:2 stoichiometry, which will stimulate the recruitment of host PI4KB in order to synthesize PI4P at the viral RNA replication sites. Interacts with RNA-directed RNA polymerase. In terms of assembly, interacts with protein 3AB and with RNA-directed RNA polymerase. As to quaternary structure, interacts with Viral protein genome-linked and with protein 3CD. Mg(2+) is required as a cofactor. Specific enzymatic cleavages in vivo by the viral proteases yield processing intermediates and the mature proteins. In terms of processing, myristoylation is required for the formation of pentamers during virus assembly. Further assembly of 12 pentamers and a molecule of genomic RNA generates the provirion. Post-translationally, during virion maturation, immature virions are rendered infectious following cleavage of VP0 into VP4 and VP2. This maturation seems to be an autocatalytic event triggered by the presence of RNA in the capsid and it is followed by a conformational change infectious virion. Myristoylation is required during RNA encapsidation and formation of the mature virus particle. In terms of processing, VPg is uridylylated by the polymerase into VPg-pUpU. This acts as a nucleotide-peptide primer for the genomic RNA replication.

Its subcellular location is the virion. The protein localises to the host cytoplasm. The protein resides in the host cytoplasmic vesicle membrane. It is found in the host nucleus. The enzyme catalyses a ribonucleoside 5'-triphosphate + H2O = a ribonucleoside 5'-diphosphate + phosphate + H(+). The catalysed reaction is Selective cleavage of Tyr-|-Gly bond in the picornavirus polyprotein.. It carries out the reaction RNA(n) + a ribonucleoside 5'-triphosphate = RNA(n+1) + diphosphate. It catalyses the reaction Selective cleavage of Gln-|-Gly bond in the poliovirus polyprotein. In other picornavirus reactions Glu may be substituted for Gln, and Ser or Thr for Gly.. With respect to regulation, replication or transcription is subject to high level of random mutations by the nucleotide analog ribavirin. In terms of biological role, forms an icosahedral capsid of pseudo T=3 symmetry with capsid proteins VP2 and VP3. The capsid is 300 Angstroms in diameter, composed of 60 copies of each capsid protein and enclosing the viral positive strand RNA genome. Capsid protein VP1 mainly forms the vertices of the capsid. Capsid protein VP1 interacts with host cell receptor to provide virion attachment to target host cells. This attachment induces virion internalization. Tyrosine kinases are probably involved in the entry process. After binding to its receptor, the capsid undergoes conformational changes. Capsid protein VP1 N-terminus (that contains an amphipathic alpha-helix) and capsid protein VP4 are externalized. Together, they shape a pore in the host membrane through which viral genome is translocated to host cell cytoplasm. Functionally, forms an icosahedral capsid of pseudo T=3 symmetry with capsid proteins VP2 and VP3. The capsid is 300 Angstroms in diameter, composed of 60 copies of each capsid protein and enclosing the viral positive strand RNA genome. Its function is as follows. Lies on the inner surface of the capsid shell. After binding to the host receptor, the capsid undergoes conformational changes. Capsid protein VP4 is released, Capsid protein VP1 N-terminus is externalized, and together, they shape a pore in the host membrane through which the viral genome is translocated into the host cell cytoplasm. Component of immature procapsids, which is cleaved into capsid proteins VP4 and VP2 after maturation. Allows the capsid to remain inactive before the maturation step. In terms of biological role, cysteine protease that cleaves viral polyprotein and specific host proteins. It is responsible for the autocatalytic cleavage between the P1 and P2 regions, which is the first cleavage occurring in the polyprotein. Also cleaves the host translation initiation factor EIF4G1, in order to shut down the capped cellular mRNA translation. Inhibits the host nucleus-cytoplasm protein and RNA trafficking by cleaving host members of the nuclear pores. Counteracts stress granule formation probably by antagonizing its assembly or promoting its dissassembly. Functionally, plays an essential role in the virus replication cycle by acting as a viroporin. Creates a pore in the host endoplasmic reticulum and as a consequence releases Ca2+ in the cytoplasm of infected cell. In turn, high levels of cytoplasmic calcium may trigger membrane trafficking and transport of viral ER-associated proteins to viroplasms, sites of viral genome replication. Its function is as follows. Induces and associates with structural rearrangements of intracellular membranes. Displays RNA-binding, nucleotide binding and NTPase activities. May play a role in virion morphogenesis and viral RNA encapsidation by interacting with the capsid protein VP3. Localizes the viral replication complex to the surface of membranous vesicles. Together with protein 3CD binds the Cis-Active RNA Element (CRE) which is involved in RNA synthesis initiation. Acts as a cofactor to stimulate the activity of 3D polymerase, maybe through a nucleid acid chaperone activity. In terms of biological role, localizes the viral replication complex to the surface of membranous vesicles. It inhibits host cell endoplasmic reticulum-to-Golgi apparatus transport and causes the disassembly of the Golgi complex, possibly through GBF1 interaction. This would result in depletion of MHC, trail receptors and IFN receptors at the host cell surface. Plays an essential role in viral RNA replication by recruiting ACBD3 and PI4KB at the viral replication sites, thereby allowing the formation of the rearranged membranous structures where viral replication takes place. Functionally, acts as a primer for viral RNA replication and remains covalently bound to viral genomic RNA. VPg is uridylylated prior to priming replication into VPg-pUpU. The oriI viral genomic sequence may act as a template for this. The VPg-pUpU is then used as primer on the genomic RNA poly(A) by the RNA-dependent RNA polymerase to replicate the viral genome. During genome replication, the VPg-RNA linkage is removed by the host TDP2, thereby accelerating replication. During the late stage of the replication cycle, host TDP2 is excluded from sites of viral RNA synthesis and encapsidation, allowing for the generation of progeny virions. Its function is as follows. Involved in the viral replication complex and viral polypeptide maturation. It exhibits protease activity with a specificity and catalytic efficiency that is different from protease 3C. Protein 3CD lacks polymerase activity. Protein 3CD binds to the 5'UTR of the viral genome. Replicates the viral genomic RNA on the surface of intracellular membranes. May form linear arrays of subunits that propagate along a strong head-to-tail interaction called interface-I. Covalently attaches UMP to a tyrosine of VPg, which is used to prime RNA synthesis. The positive stranded RNA genome is first replicated at virus induced membranous vesicles, creating a dsRNA genomic replication form. This dsRNA is then used as template to synthesize positive stranded RNA genomes. ss(+)RNA genomes are either translated, replicated or encapsidated. In terms of biological role, major viral protease that mediates proteolytic processing of the polyprotein. Cleaves host EIF5B, contributing to host translation shutoff. Also cleaves host PABPC1, contributing to host translation shutoff. Cleaves host NLRP1, triggers host N-glycine-mediated degradation of the autoinhibitory NLRP1 N-terminal fragment. The sequence is that of Genome polyprotein from Sus scrofa (Pig).